The sequence spans 360 residues: GDSL esterase/lipase At2g31540 (360 aa).

A signal peptide spans 1–23 (MSTSKAITLTLFIATTLLAPCNA). Ser42 acts as the Nucleophile in catalysis. Asn104 and Asn326 each carry an N-linked (GlcNAc...) asparagine glycan. Residues Asp334 and His337 contribute to the active site.

It belongs to the 'GDSL' lipolytic enzyme family.

Its subcellular location is the secreted. This is GDSL esterase/lipase At2g31540 from Arabidopsis thaliana (Mouse-ear cress).